The sequence spans 103 residues: MYGDRYIDWDGAHVRTLFAPVTVYTRPGCKPCERVKDKLTAAGIDFDAVDVTANSEAYDYVTKVLNAMSVPVVVTDTHKPILGYQPDQLDELIDYYTASETGL.

The Glutaredoxin domain occupies 9-103 (WDGAHVRTLF…DYYTASETGL (95 aa)).

In Mycobacterium phage L5 (Mycobacteriophage L5), this protein is Gene 56 protein (56).